We begin with the raw amino-acid sequence, 175 residues long: Small ribosomal subunit protein uS5 (175 aa).

The region spanning 19–82 (WQERVIQIRR…ADGKKHLIDI (64 aa)) is the S5 DRBM domain.

The protein belongs to the universal ribosomal protein uS5 family. In terms of assembly, part of the 30S ribosomal subunit. Contacts proteins S4 and S8.

In terms of biological role, with S4 and S12 plays an important role in translational accuracy. Located at the back of the 30S subunit body where it stabilizes the conformation of the head with respect to the body. The sequence is that of Small ribosomal subunit protein uS5 from Nostoc punctiforme (strain ATCC 29133 / PCC 73102).